A 146-amino-acid polypeptide reads, in one-letter code: uncharacterized protein (146 aa).

Positions 1–17 (MKRLLILTALLPFVGFA) are cleaved as a signal peptide. 2 disordered regions span residues 27 to 54 (NQPG…KGML) and 70 to 146 (ENQI…TIGP). Residues 32–54 (QIPSQQRMQTQMQTQQIQQKGML) are compositionally biased toward low complexity. Residues 77 to 118 (SQRVLQSQPGERNPARQQMLPNTNGGMLNSNRNPDSSLNQQH) show a composition bias toward polar residues.

This is an uncharacterized protein from Escherichia coli (strain K12).